We begin with the raw amino-acid sequence, 99 residues long: DNA-binding protein Fis (99 aa).

The H-T-H motif DNA-binding region spans Q75–K94.

Belongs to the transcriptional regulatory Fis family. In terms of assembly, homodimer.

Functionally, activates ribosomal RNA transcription. Plays a direct role in upstream activation of rRNA promoters. This Haemophilus influenzae (strain 86-028NP) protein is DNA-binding protein Fis.